The primary structure comprises 855 residues: Inactive rhomboid protein 1 (855 aa).

The tract at residues 1–36 (MSEARRDSTSSLQRKKPPWLKLDIPSAVPPTAEEPS) is disordered. The Cytoplasmic portion of the chain corresponds to 1–411 (MSEARRDSTS…HRPFFTYWLT (411 aa)). A phosphoserine mark is found at Ser-76 and Ser-176. Thr-180 and Thr-183 each carry phosphothreonine. Ser-390 is modified (phosphoserine). A helical transmembrane segment spans residues 412 to 432 (FVHSLVTILAVCIYGIAPVGF). Residues 433-655 (SQHETVDSVL…NPEVPDQFYR (223 aa)) lie on the Lumenal side of the membrane. Asn-583 carries an N-linked (GlcNAc...) asparagine glycan. A helical membrane pass occupies residues 656-676 (LWLSLFLHAGILHCLVSICFQ). The Cytoplasmic portion of the chain corresponds to 677–691 (MTVLRDLEKLAGWHR). The helical transmembrane segment at 692-712 (IAIIYLLSGVTGNLASAIFLP) threads the bilayer. Over 713-714 (YR) the chain is Lumenal. Residues 715–735 (AEVGPAGSQFGILACLFVELF) traverse the membrane as a helical segment. At 736–746 (QSWQILARPWR) the chain is on the cytoplasmic side. The helical transmembrane segment at 747–767 (AFFKLLAVVLFLFTFGLLPWI) threads the bilayer. Over 768 to 772 (DNFAH) the chain is Lumenal. A helical transmembrane segment spans residues 773 to 793 (ISGFISGLFLSFAFLPYISFG). At 794–803 (KFDLYRKRCQ) the chain is on the cytoplasmic side. The chain crosses the membrane as a helical span at residues 804 to 824 (IIIFQVVFLGLLAGLVVLFYF). The Lumenal portion of the chain corresponds to 825-855 (YPVRCEWCEFLTCIPFTDKFCEKYELDAQLH).

Belongs to the peptidase S54 family. Homodimer, or homooligomer. Interacts with TGFA and HBEGF. Interacts with EGF; may retain EGF in the endoplasmic reticulum and regulates its degradation through the endoplasmic reticulum-associated degradation (ERAD). Interacts (via cytoplasmic N-terminus) with FRMD8/iTAP; this interaction leads to mutual protein stabilization. Interacts with ADAM17/TACE.

It is found in the endoplasmic reticulum membrane. The protein resides in the golgi apparatus membrane. Functionally, regulates ADAM17 protease, a sheddase of the epidermal growth factor (EGF) receptor ligands and TNF, thereby plays a role in sleep, cell survival, proliferation, migration and inflammation. Does not exhibit any protease activity on its own. The protein is Inactive rhomboid protein 1 (RHBDF1) of Papio anubis (Olive baboon).